The sequence spans 517 residues: Perilipin-1 (517 aa).

At Ser81 the chain carries Phosphoserine. Thr85 is subject to Phosphothreonine. Phosphoserine is present on residues Ser126, Ser130, Ser132, Ser137, and Ser174. Positions 197-217 (VESAPSSGRQKTQKAPKAKPS) are disordered. Thr224, Thr299, and Thr301 each carry phosphothreonine. Positions 285 to 321 (HNLAASKDENHEDQTDTEGEETDEEEEEEESEAEENV) are disordered. Residues 291–322 (KDENHEDQTDTEGEETDEEEEEEESEAEENVL) form a required for interaction with CIDEC region. Over residues 299 to 319 (TDTEGEETDEEEEEEESEAEE) the composition is skewed to acidic residues. A phosphoserine mark is found at Ser315, Ser385, Ser387, Pro408, Ser411, Ser434, Ser436, Ser440, Ser460, Ser492, and Ser494. Residues 415–495 (PESEFQDIDN…KPARRVSDSF (81 aa)) form a disordered region. Basic and acidic residues predominate over residues 483 to 492 (PREKPARRVS).

It belongs to the perilipin family. Interacts with ABHD5. Interacts with CIDEC. Interacts with AQP7. In terms of processing, major cAMP-dependent protein kinase substrate in adipocytes, also dephosphorylated by PP1. When phosphorylated, may be maximally sensitive to HSL. When unphosphorylated, may play a role in the inhibition of lipolysis, by acting as a barrier in lipid droplet. The N-terminus is blocked. Adipocytes.

Its subcellular location is the endoplasmic reticulum. It is found in the lipid droplet. Its function is as follows. Modulator of adipocyte lipid metabolism. Coats lipid storage droplets to protect them from breakdown by hormone-sensitive lipase (HSL). Its absence may result in leanness. Plays a role in unilocular lipid droplet formation by activating CIDEC. Their interaction promotes lipid droplet enlargement and directional net neutral lipid transfer. May modulate lipolysis and triglyceride levels. The chain is Perilipin-1 (Plin1) from Rattus norvegicus (Rat).